Consider the following 388-residue polypeptide: Formate-dependent phosphoribosylglycinamide formyltransferase (388 aa).

Residues 20-21 (EL) and Glu80 each bind N(1)-(5-phospho-beta-D-ribosyl)glycinamide. Residues Arg112, Lys153, 158-163 (SSGKGQ), 193-196 (EEFV), and Glu201 each bind ATP. The ATP-grasp domain occupies 117–306 (RLASEKLGLR…EFEIHVRSIL (190 aa)). Mg(2+) is bound by residues Glu265 and Glu277. N(1)-(5-phospho-beta-D-ribosyl)glycinamide-binding positions include Asp284, Lys352, and 359–360 (RR).

It belongs to the PurK/PurT family. In terms of assembly, homodimer.

It catalyses the reaction N(1)-(5-phospho-beta-D-ribosyl)glycinamide + formate + ATP = N(2)-formyl-N(1)-(5-phospho-beta-D-ribosyl)glycinamide + ADP + phosphate + H(+). Its pathway is purine metabolism; IMP biosynthesis via de novo pathway; N(2)-formyl-N(1)-(5-phospho-D-ribosyl)glycinamide from N(1)-(5-phospho-D-ribosyl)glycinamide (formate route): step 1/1. Its function is as follows. Involved in the de novo purine biosynthesis. Catalyzes the transfer of formate to 5-phospho-ribosyl-glycinamide (GAR), producing 5-phospho-ribosyl-N-formylglycinamide (FGAR). Formate is provided by PurU via hydrolysis of 10-formyl-tetrahydrofolate. In Methanococcus vannielii (strain ATCC 35089 / DSM 1224 / JCM 13029 / OCM 148 / SB), this protein is Formate-dependent phosphoribosylglycinamide formyltransferase.